Consider the following 629-residue polypeptide: tRNA uridine 5-carboxymethylaminomethyl modification enzyme MnmG (629 aa).

FAD-binding positions include 13–18 (GGGHAG), Val125, and Ser180. 273–287 (GPRYCPSIEDKVMRF) contributes to the NAD(+) binding site. Gln370 provides a ligand contact to FAD.

This sequence belongs to the MnmG family. As to quaternary structure, homodimer. Heterotetramer of two MnmE and two MnmG subunits. FAD is required as a cofactor.

The protein resides in the cytoplasm. In terms of biological role, NAD-binding protein involved in the addition of a carboxymethylaminomethyl (cmnm) group at the wobble position (U34) of certain tRNAs, forming tRNA-cmnm(5)s(2)U34. The protein is tRNA uridine 5-carboxymethylaminomethyl modification enzyme MnmG of Salmonella choleraesuis (strain SC-B67).